Consider the following 403-residue polypeptide: Tyrosine--tRNA ligase (403 aa).

Positions 42-51 match the 'HIGH' region motif; that stretch reads PTAPDLHLGH. Residues 226–230 carry the 'KMSKS' region motif; sequence KMSKS. Residue lysine 229 coordinates ATP. One can recognise an S4 RNA-binding domain in the interval 339-400; the sequence is LRIASLLTAA…GKRNFARVSL (62 aa).

The protein belongs to the class-I aminoacyl-tRNA synthetase family. TyrS type 2 subfamily. As to quaternary structure, homodimer.

Its subcellular location is the cytoplasm. It catalyses the reaction tRNA(Tyr) + L-tyrosine + ATP = L-tyrosyl-tRNA(Tyr) + AMP + diphosphate + H(+). In terms of biological role, catalyzes the attachment of tyrosine to tRNA(Tyr) in a two-step reaction: tyrosine is first activated by ATP to form Tyr-AMP and then transferred to the acceptor end of tRNA(Tyr). This Xanthomonas oryzae pv. oryzae (strain MAFF 311018) protein is Tyrosine--tRNA ligase.